The primary structure comprises 618 residues: Paraneoplastic antigen-like protein 5 (618 aa).

The segment covering 390-399 (AGEEGQRKES) has biased composition (basic and acidic residues). Disordered stretches follow at residues 390 to 409 (AGEE…EPDE), 451 to 475 (RDTL…EGQQ), and 519 to 549 (SMIT…ELRM).

Belongs to the PNMA family. Restricted to testis, where expression is low. Not detected in the brain.

The protein localises to the nucleus. The protein is Paraneoplastic antigen-like protein 5 (Pnma5) of Mus musculus (Mouse).